The chain runs to 236 residues: ATP synthase subunit a (236 aa).

Helical transmembrane passes span W17–L37, S76–I96, P113–A133, I170–S190, and M196–I216.

The protein belongs to the ATPase A chain family. In terms of assembly, F-type ATPases have 2 components, CF(1) - the catalytic core - and CF(0) - the membrane proton channel. CF(1) has five subunits: alpha(3), beta(3), gamma(1), delta(1), epsilon(1). CF(0) has three main subunits: a(1), b(2) and c(9-12). The alpha and beta chains form an alternating ring which encloses part of the gamma chain. CF(1) is attached to CF(0) by a central stalk formed by the gamma and epsilon chains, while a peripheral stalk is formed by the delta and b chains.

The protein localises to the cell membrane. Key component of the proton channel; it plays a direct role in the translocation of protons across the membrane. The protein is ATP synthase subunit a of Limosilactobacillus fermentum (strain NBRC 3956 / LMG 18251) (Lactobacillus fermentum).